Here is a 198-residue protein sequence, read N- to C-terminus: Beta-crystallin A1-2 (198 aa).

The N-terminal arm stretch occupies residues 1 to 13 (MAQINPLPVPLGP). Beta/gamma crystallin 'Greek key' domains follow at residues 14–53 (WKIT…KVEC) and 54–100 (GAWI…RPIC). Residues 101-106 (SANHIE) form a connecting peptide region. Beta/gamma crystallin 'Greek key' domains are found at residues 107 to 148 (SKLV…KVQC) and 149 to 197 (GAWV…RRIQ).

Belongs to the beta/gamma-crystallin family. Homo/heterodimer, or complexes of higher-order. The structure of beta-crystallin oligomers seems to be stabilized through interactions between the N-terminal arms. In terms of processing, the N-terminus is blocked.

Functionally, crystallins are the dominant structural components of the vertebrate eye lens. In Aquarana catesbeiana (American bullfrog), this protein is Beta-crystallin A1-2.